We begin with the raw amino-acid sequence, 61 residues long: [Thr6]-bradykinyl-Val,Asp (61 aa).

The N-terminal stretch at 1–22 (MSFLKKSLFLVLFLGFVSFSIC) is a signal peptide. Residues 23–50 (EEEKREDEEEENEREENKESEEKRNQEE) constitute a propeptide that is removed on maturation. Residues 24-61 (EEKREDEEEENEREENKESEEKRNQEERPPGFTPFRVD) form a disordered region. The span at 26–36 (KREDEEEENER) shows a compositional bias: acidic residues. Positions 37-52 (EENKESEEKRNQEERP) are enriched in basic and acidic residues. Pro53 carries the 4-hydroxyproline; in form [Hyp3,Thr6]-bradykinyl-Val,Asp and [Hyp3,Thr6]-bradykinin modification.

It belongs to the frog skin active peptide (FSAP) family. Bradykinin-related peptide subfamily. Expressed by the skin glands.

The protein localises to the secreted. Functionally, induces relaxation of rat smooth muscle from tail artery (EC(50)=16.8 nM) and contraction of that from ileum (EC(50)=205 nM), urinary bladder (EC(50)=895 nM) and uterus (EC(50)=60.3 nM). Binds to both bradykinin receptor B1 (BDKRB1) and B2 (BDKRB2). Its function is as follows. [Hyp3,Thr6]-bradykinin: Induces relaxation of rat smooth muscle from tail artery (EC(50)=56.7 nM) and contraction of that from ileum (EC(50)=588 nM), urinary bladder (EC(50)=4.6 uM) and uterus (EC(50)=3.9 nM). Binds to both bradykinin receptor B1 (BDKRB1) and B2 (BDKRB2). In arterial smooth muscle, the effect via BDKRB1 is stronger, in uterus, ileum and urinary bladder the effect via BDKRB2. Induces relaxation of rat smooth muscle from tail artery (EC(50)=10.8 nM) and contraction of that from ileum (EC(50)=645 nM), urinary bladder (EC(50)=1.1 uM) and uterus (EC(50)=1.2 uM). Binds to both bradykinin receptor B1 (BDKRB1) and B2 (BDKRB2). Apart from uterus smooth muscle, the effect via BDKRB2 is stronger. In terms of biological role, [Hyp3,Thr6]-bradykinyl-Val,Asp: Induces relaxation of rat smooth muscle from tail artery (EC(50)=3.5 nM) and contraction of that from ileum (EC(50)=223 nM), urinary bladder (EC(50)=1.5 uM) and uterus (EC(50)=356 nM). Binds to both bradykinin receptor B1 (BDKRB1) and B2 (BDKRB2); the effects via BDKRB2 are stronger. The sequence is that of [Thr6]-bradykinyl-Val,Asp from Agalychnis dacnicolor (Giant Mexican leaf frog).